Here is a 423-residue protein sequence, read N- to C-terminus: MSIQENLNNLIKPHGGKLIKTLKYGAERDECIKEAKSLPKIDISSREFGDLVMMGIGGFSPLNGFMKKEDWFSVCKNFTLADGTFWPIPITMSVSEEEAKKLKRGQKVALKYNKDINDISGTIEIDQVYEMTKKDKEMECKDIFTTTDSDHPGVKKVMEQKPFNVAGKVTTLSEGEFPIKYKGIYMTPEESRLNFAKKGWKTIAALQLRNPMHRSHEFLAKIAVEVCDGVFIHSLVGNLKPGDIPAEVRVKCIDALVDKYFVKKNVLQGGYPLDMRYGGPREALLHATFRQNYGCTHMIIGRDHAGVGDYYGPFDAQKIFDKIPYNADPKKRLLTQPMKIDWTFYCHKCDGMASLRTCPHTKKDRVIVSGTMVRKMLSEGKTLPDHFGRAESLKILADYYQHLDKSKKVTIKLQKFATGDAMK.

2 residues coordinate sulfate: glutamine 207 and arginine 209. ATP contacts are provided by residues 207 to 210 (QLRN) and 301 to 304 (GRDH). Catalysis depends on residues arginine 209 and asparagine 210. Residue alanine 305 participates in sulfate binding.

Belongs to the sulfate adenylyltransferase family.

It localises to the mitosome. It carries out the reaction sulfate + ATP + H(+) = adenosine 5'-phosphosulfate + diphosphate. The protein operates within sulfur metabolism; hydrogen sulfide biosynthesis; sulfite from sulfate: step 1/3. Catalyzes the first intracellular reaction of sulfate assimilation, forming adenosine-5'-phosphosulfate (APS) from inorganic sulfate and ATP. The protein is Sulfate adenylyltransferase of Entamoeba histolytica (strain ATCC 30459 / HM-1:IMSS / ABRM).